The sequence spans 809 residues: Leucine--tRNA ligase (809 aa).

The 'HIGH' region signature appears at 40–50 (PYPSGRIHMGH). The 'KMSKS' region signature appears at 579 to 583 (KMSKS). K582 contacts ATP.

The protein belongs to the class-I aminoacyl-tRNA synthetase family.

It is found in the cytoplasm. It catalyses the reaction tRNA(Leu) + L-leucine + ATP = L-leucyl-tRNA(Leu) + AMP + diphosphate. The chain is Leucine--tRNA ligase from Campylobacter jejuni subsp. jejuni serotype O:23/36 (strain 81-176).